Consider the following 329-residue polypeptide: Porphobilinogen deaminase (329 aa).

Position 250 is an S-(dipyrrolylmethanemethyl)cysteine (Cys250).

It belongs to the HMBS family. As to quaternary structure, monomer. Dipyrromethane serves as cofactor.

The enzyme catalyses 4 porphobilinogen + H2O = hydroxymethylbilane + 4 NH4(+). It participates in porphyrin-containing compound metabolism; protoporphyrin-IX biosynthesis; coproporphyrinogen-III from 5-aminolevulinate: step 2/4. Its function is as follows. Tetrapolymerization of the monopyrrole PBG into the hydroxymethylbilane pre-uroporphyrinogen in several discrete steps. In Burkholderia thailandensis (strain ATCC 700388 / DSM 13276 / CCUG 48851 / CIP 106301 / E264), this protein is Porphobilinogen deaminase.